Consider the following 176-residue polypeptide: Large ribosomal subunit protein bL12m (176 aa).

It belongs to the bacterial ribosomal protein bL12 family. As to quaternary structure, component of the mitochondrial large ribosomal subunit (mt-LSU). Mature N.crassa 74S mitochondrial ribosomes consist of a small (37S) and a large (54S) subunit. The 37S small subunit contains a 16S ribosomal RNA (16S mt-rRNA) and 32 different proteins. The 54S large subunit contains a 23S rRNA (23S mt-rRNA) and 42 different proteins.

Its subcellular location is the mitochondrion. Its function is as follows. Component of the mitochondrial ribosome (mitoribosome), a dedicated translation machinery responsible for the synthesis of mitochondrial genome-encoded proteins, including at least some of the essential transmembrane subunits of the mitochondrial respiratory chain. The mitoribosomes are attached to the mitochondrial inner membrane and translation products are cotranslationally integrated into the membrane. This chain is Large ribosomal subunit protein bL12m (mrpl12), found in Neurospora crassa (strain ATCC 24698 / 74-OR23-1A / CBS 708.71 / DSM 1257 / FGSC 987).